The chain runs to 230 residues: Octanoyltransferase (230 aa).

In terms of domain architecture, BPL/LPL catalytic spans 31 to 230; the sequence is PETPDELWIC…GDKLTRYLAP (200 aa). Residues 70–77, 163–165, and 176–178 each bind substrate; these read RGGQVTYH, ALG, and GVA. Catalysis depends on Cys-194, which acts as the Acyl-thioester intermediate.

This sequence belongs to the LipB family.

Its subcellular location is the cytoplasm. It catalyses the reaction octanoyl-[ACP] + L-lysyl-[protein] = N(6)-octanoyl-L-lysyl-[protein] + holo-[ACP] + H(+). It participates in protein modification; protein lipoylation via endogenous pathway; protein N(6)-(lipoyl)lysine from octanoyl-[acyl-carrier-protein]: step 1/2. Functionally, catalyzes the transfer of endogenously produced octanoic acid from octanoyl-acyl-carrier-protein onto the lipoyl domains of lipoate-dependent enzymes. Lipoyl-ACP can also act as a substrate although octanoyl-ACP is likely to be the physiological substrate. This Albidiferax ferrireducens (strain ATCC BAA-621 / DSM 15236 / T118) (Rhodoferax ferrireducens) protein is Octanoyltransferase.